The following is a 121-amino-acid chain: Large ribosomal subunit protein uL18 (121 aa).

The protein belongs to the universal ribosomal protein uL18 family. In terms of assembly, part of the 50S ribosomal subunit; part of the 5S rRNA/L5/L18/L25 subcomplex. Contacts the 5S and 23S rRNAs.

This is one of the proteins that bind and probably mediate the attachment of the 5S RNA into the large ribosomal subunit, where it forms part of the central protuberance. This is Large ribosomal subunit protein uL18 from Desulfotalea psychrophila (strain LSv54 / DSM 12343).